The following is a 132-amino-acid chain: Small ribosomal subunit protein uS17c (132 aa).

The span at 1–11 shows a compositional bias: low complexity; that stretch reads MLLLSSPFVSV. Disordered regions lie at residues 1–23 and 104–132; these read MLLL…SHGA and PLPP…SSRE. A chloroplast-targeting transit peptide spans 1 to 31; it reads MLLLSSPFVSVSPPPPPLSSHGARPALRIEA. Positions 122–132 are enriched in acidic residues; sequence SDDDQEPSSRE.

Belongs to the universal ribosomal protein uS17 family. As to quaternary structure, part of the 30S ribosomal subunit.

The protein localises to the plastid. The protein resides in the chloroplast. In terms of biological role, one of the primary rRNA binding proteins, it binds specifically to the 5'-end of 16S ribosomal RNA. Its function is as follows. In the hcf60 mutation the Activator tag is inserted 17 base pars upstream of the initiation codon. This mutation is seedling lethal, due to plastid ribosome insufficiency. However under non-light stressed conditions photosynthesis and oxygen evolution can occur. This is Small ribosomal subunit protein uS17c (RPS17) from Zea mays (Maize).